A 177-amino-acid polypeptide reads, in one-letter code: Large ribosomal subunit protein uL6 (177 aa).

It belongs to the universal ribosomal protein uL6 family. As to quaternary structure, part of the 50S ribosomal subunit.

Its function is as follows. This protein binds to the 23S rRNA, and is important in its secondary structure. It is located near the subunit interface in the base of the L7/L12 stalk, and near the tRNA binding site of the peptidyltransferase center. This is Large ribosomal subunit protein uL6 from Nitrobacter winogradskyi (strain ATCC 25391 / DSM 10237 / CIP 104748 / NCIMB 11846 / Nb-255).